A 219-amino-acid polypeptide reads, in one-letter code: Octanoyltransferase (219 aa).

Residues 31-206 (TASADEIWLV…ECLRLMKASA (176 aa)) enclose the BPL/LPL catalytic domain. Residues 70–77 (RGGQVTFH), 137–139 (SLG), and 150–152 (GLA) each bind substrate. Residue cysteine 168 is the Acyl-thioester intermediate of the active site.

Belongs to the LipB family.

It localises to the cytoplasm. The enzyme catalyses octanoyl-[ACP] + L-lysyl-[protein] = N(6)-octanoyl-L-lysyl-[protein] + holo-[ACP] + H(+). The protein operates within protein modification; protein lipoylation via endogenous pathway; protein N(6)-(lipoyl)lysine from octanoyl-[acyl-carrier-protein]: step 1/2. Catalyzes the transfer of endogenously produced octanoic acid from octanoyl-acyl-carrier-protein onto the lipoyl domains of lipoate-dependent enzymes. Lipoyl-ACP can also act as a substrate although octanoyl-ACP is likely to be the physiological substrate. The chain is Octanoyltransferase from Sodalis glossinidius (strain morsitans).